The following is a 343-amino-acid chain: 4-hydroxy-2-oxovalerate aldolase 1 (343 aa).

Residues 8 to 260 (ITVHDMSLRD…ETGVDVFAIS (253 aa)) form the Pyruvate carboxyltransferase domain. 16-17 (RD) is a binding site for substrate. Residue Asp17 participates in Mn(2+) binding. Catalysis depends on His20, which acts as the Proton acceptor. The substrate site is built by Ser170 and His199. His199 and His201 together coordinate Mn(2+). Substrate is bound at residue Tyr290.

Belongs to the 4-hydroxy-2-oxovalerate aldolase family.

The catalysed reaction is (S)-4-hydroxy-2-oxopentanoate = acetaldehyde + pyruvate. This chain is 4-hydroxy-2-oxovalerate aldolase 1 (bphI), found in Burkholderia cenocepacia (strain ATCC BAA-245 / DSM 16553 / LMG 16656 / NCTC 13227 / J2315 / CF5610) (Burkholderia cepacia (strain J2315)).